Here is a 187-residue protein sequence, read N- to C-terminus: Flavin prenyltransferase UbiX (187 aa).

Residues 9–11, S34, and R123 contribute to the FMN site; that span reads GAS. Y153 and K169 together coordinate dimethylallyl phosphate.

This sequence belongs to the UbiX/PAD1 family.

It catalyses the reaction dimethylallyl phosphate + FMNH2 = prenylated FMNH2 + phosphate. Flavin prenyltransferase that catalyzes the synthesis of the prenylated FMN cofactor (prenyl-FMN) for 4-hydroxy-3-polyprenylbenzoic acid decarboxylase UbiD. The prenyltransferase is metal-independent and links a dimethylallyl moiety from dimethylallyl monophosphate (DMAP) to the flavin N5 and C6 atoms of FMN. In Helicobacter pylori (strain J99 / ATCC 700824) (Campylobacter pylori J99), this protein is Flavin prenyltransferase UbiX.